A 193-amino-acid polypeptide reads, in one-letter code: NADH-quinone oxidoreductase subunit B (193 aa).

Residues cysteine 72, cysteine 73, cysteine 137, and cysteine 167 each coordinate [4Fe-4S] cluster.

The protein belongs to the complex I 20 kDa subunit family. In terms of assembly, NDH-1 is composed of 14 different subunits. Subunits NuoB, C, D, E, F, and G constitute the peripheral sector of the complex. Requires [4Fe-4S] cluster as cofactor.

Its subcellular location is the cell inner membrane. It carries out the reaction a quinone + NADH + 5 H(+)(in) = a quinol + NAD(+) + 4 H(+)(out). Functionally, NDH-1 shuttles electrons from NADH, via FMN and iron-sulfur (Fe-S) centers, to quinones in the respiratory chain. The immediate electron acceptor for the enzyme in this species is believed to be ubiquinone. Couples the redox reaction to proton translocation (for every two electrons transferred, four hydrogen ions are translocated across the cytoplasmic membrane), and thus conserves the redox energy in a proton gradient. In Bartonella quintana (strain Toulouse) (Rochalimaea quintana), this protein is NADH-quinone oxidoreductase subunit B.